The primary structure comprises 450 residues: Phosphoglucosamine mutase (450 aa).

The active-site Phosphoserine intermediate is S102. Mg(2+) contacts are provided by S102, D244, D246, and D248. Residue S102 is modified to Phosphoserine.

This sequence belongs to the phosphohexose mutase family. Mg(2+) serves as cofactor. In terms of processing, activated by phosphorylation.

It carries out the reaction alpha-D-glucosamine 1-phosphate = D-glucosamine 6-phosphate. In terms of biological role, catalyzes the conversion of glucosamine-6-phosphate to glucosamine-1-phosphate. The sequence is that of Phosphoglucosamine mutase from Bartonella bacilliformis (strain ATCC 35685 / KC583 / Herrer 020/F12,63).